The following is a 339-amino-acid chain: Methylcobamide:CoM methyltransferase MtaA (339 aa).

H237, C239, and C316 together coordinate Zn(2+).

The protein belongs to the uroporphyrinogen decarboxylase family. MtbA/mtaA subfamily. Zn(2+) is required as a cofactor.

It catalyses the reaction methyl-Co(III)-[methanol-specific corrinoid protein] + coenzyme M = Co(I)-[methanol-specific corrinoid protein] + methyl-coenzyme M + H(+). In terms of biological role, methyltransferase involved in methanogenesis in the methanol pathway. Catalyzes the transfer of the methyl group from the methylated corrinoid protein MtaC to coenzyme M, forming the substrate for coenzyme-B sulfoethylthiotransferase. MtaC can be substituted by free cob(I)alamin in vitro. In Methanosarcina barkeri (strain Fusaro / DSM 804), this protein is Methylcobamide:CoM methyltransferase MtaA (mtaA).